We begin with the raw amino-acid sequence, 238 residues long: Ephrin-A3 (238 aa).

An N-terminal signal peptide occupies residues 1 to 22 (MAAAPLLLLLLLVPVPLLPLLA). In terms of domain architecture, Ephrin RBD spans 30–169 (GNRHAVYWNS…RMKVFVCCAS (140 aa)). N-linked (GlcNAc...) asparagine glycans are attached at residues asparagine 38, asparagine 67, and asparagine 100. 2 disulfides stabilise this stretch: cysteine 63/cysteine 110 and cysteine 99/cysteine 158. Glycine 214 is lipidated: GPI-anchor amidated glycine. Residues 215-238 (TSPKREHLPLAVGIAFFLMTFLAS) constitute a propeptide, removed in mature form.

This sequence belongs to the ephrin family. As to quaternary structure, interacts with EPHA8; activates EPHA8. As to expression, expressed in brain, skeletal muscle, spleen, thymus, prostate, testis, ovary, small intestine, and peripheral blood leukocytes.

It localises to the cell membrane. In terms of biological role, cell surface GPI-bound ligand for Eph receptors, a family of receptor tyrosine kinases which are crucial for migration, repulsion and adhesion during neuronal, vascular and epithelial development. Binds promiscuously Eph receptors residing on adjacent cells, leading to contact-dependent bidirectional signaling into neighboring cells. The signaling pathway downstream of the receptor is referred to as forward signaling while the signaling pathway downstream of the ephrin ligand is referred to as reverse signaling. The protein is Ephrin-A3 (EFNA3) of Homo sapiens (Human).